The chain runs to 254 residues: MKFEAIAVEKIPLIHEGDNLPSIICEKIGLQDRDIMIIASTIVAKAEGEIFRLEDITPGEEALEIAARTGKDPRFIQAVLSKSREVFVETPFMLVTTLAGHTCVNAGIDESNIENGFLLYPPENPDASALKIGKELEKLSGKKLSIIITDTNGRAFKIGQTGVAIGIYNIKPVKRWIGEKDLFGKVLEITEQAIADELAGAANLLMGEGAGGIPVVIIRGLDYYCEGDTSIKESYRPENMDVIKQGLRCLRNKK.

GTP contacts are provided by residues 11-14 (IPLI), 40-41 (ST), and Lys-45. Position 109 (Asp-109) interacts with a divalent metal cation. Asn-112 serves as a coordination point for GTP. Asp-150, Thr-151, and Glu-208 together coordinate a divalent metal cation. Residue 206–213 (MGEGAGGI) participates in GTP binding.

The protein belongs to the CofE family. As to quaternary structure, homodimer. The cofactor is Mg(2+). It depends on Mn(2+) as a cofactor. K(+) is required as a cofactor.

The enzyme catalyses oxidized coenzyme F420-0 + GTP + L-glutamate = oxidized coenzyme F420-1 + GDP + phosphate + H(+). It carries out the reaction oxidized coenzyme F420-1 + GTP + L-glutamate = oxidized coenzyme F420-2 + GDP + phosphate + H(+). It functions in the pathway cofactor biosynthesis; coenzyme F420 biosynthesis. Functionally, catalyzes the GTP-dependent successive addition of two or more gamma-linked L-glutamates to the L-lactyl phosphodiester of 7,8-didemethyl-8-hydroxy-5-deazariboflavin (F420-0) to form coenzyme F420-0-glutamyl-glutamate (F420-2) or polyglutamated F420 derivatives. This Methanosarcina mazei (strain ATCC BAA-159 / DSM 3647 / Goe1 / Go1 / JCM 11833 / OCM 88) (Methanosarcina frisia) protein is Coenzyme F420:L-glutamate ligase.